Reading from the N-terminus, the 211-residue chain is RNA chaperone ProQ (211 aa).

Residues 112-148 (ERRAVEKANNPKANKKRSVHHSGNKSENKKSAGKKFS) are disordered. Over residues 124–134 (ANKKRSVHHSG) the composition is skewed to basic residues.

It belongs to the ProQ family.

It is found in the cytoplasm. Its function is as follows. RNA chaperone with significant RNA binding, RNA strand exchange and RNA duplexing activities. The chain is RNA chaperone ProQ from Histophilus somni (strain 2336) (Haemophilus somnus).